Consider the following 103-residue polypeptide: ATP synthase subunit H, mitochondrial (103 aa).

Residues 1–26 (MSRILKSLSRSYSTTSPRLYVDVVQG) constitute a mitochondrion transit peptide.

The protein belongs to the ATPase h subunit family. As to quaternary structure, F-type ATPases have 2 components, CF(1) - the catalytic core - and CF(0) - the membrane proton channel.

The protein localises to the mitochondrion. Its subcellular location is the mitochondrion inner membrane. In terms of biological role, mitochondrial membrane ATP synthase (F(1)F(0) ATP synthase or Complex V) produces ATP from ADP in the presence of a proton gradient across the membrane which is generated by electron transport complexes of the respiratory chain. F-type ATPases consist of two structural domains, F(1) - containing the extramembraneous catalytic core and F(0) - containing the membrane proton channel, linked together by a central stalk and a peripheral stalk. During catalysis, ATP synthesis in the catalytic domain of F(1) is coupled via a rotary mechanism of the central stalk subunits to proton translocation. Part of the complex F(0) domain. Minor subunit located with subunit a in the membrane. The polypeptide is ATP synthase subunit H, mitochondrial (atp14) (Schizosaccharomyces pombe (strain 972 / ATCC 24843) (Fission yeast)).